We begin with the raw amino-acid sequence, 153 residues long: Lipoprotein signal peptidase (153 aa).

A run of 2 helical transmembrane segments spans residues 61-81 and 85-105; these read YFFV…LVKN and SLWL…NFID. Active-site residues include Asp-114 and Asp-130. The chain crosses the membrane as a helical span at residues 125–145; that stretch reads IFNVADSYLTVGVLLLILILW.

It belongs to the peptidase A8 family.

The protein resides in the cell membrane. The catalysed reaction is Release of signal peptides from bacterial membrane prolipoproteins. Hydrolyzes -Xaa-Yaa-Zaa-|-(S,diacylglyceryl)Cys-, in which Xaa is hydrophobic (preferably Leu), and Yaa (Ala or Ser) and Zaa (Gly or Ala) have small, neutral side chains.. It participates in protein modification; lipoprotein biosynthesis (signal peptide cleavage). This protein specifically catalyzes the removal of signal peptides from prolipoproteins. The chain is Lipoprotein signal peptidase from Streptococcus thermophilus (strain CNRZ 1066).